The primary structure comprises 474 residues: E3 ubiquitin-protein ligase rnf168 (474 aa).

Over residues 1-12 (MPPVSEVDRGPV) the composition is skewed to basic and acidic residues. Residues 1–20 (MPPVSEVDRGPVEESSGGLK) form a disordered region. The RING-type zinc finger occupies 26–65 (CPVCLEIFLEPVTLPCMHTFCKPCFLETVDKSNMCCPLCR). Positions 119 to 137 (VCQPGELRKEYEDQISKLV) match the LR motif 1 motif. The UMI motif signature appears at 152 to 160 (EEYIQRLLA). The MIU motif 1 signature appears at 174-195 (EEQQLENDEKLARLLSLELNSG). A compositionally biased stretch (polar residues) spans 192 to 203 (LNSGPASESTCN). Disordered stretches follow at residues 192 to 259 (LNSG…KPLS) and 367 to 474 (IQKE…NMGS). The segment covering 233–243 (PSSSDSSPDSS) has biased composition (low complexity). An MIU motif 2 motif is present at residues 353 to 376 (RWQQEEEDRRLALRIQKELDRENS). The segment covering 367 to 383 (IQKELDRENSVDRRKGS) has biased composition (basic and acidic residues). Residues 379–390 (RRKGSADSYQLR) carry the LR motif 2 motif. Composition is skewed to polar residues over residues 385 to 402 (DSYQLRQKNTSVSTTTSP) and 409 to 418 (KGSNTTTAKN). Positions 422-432 (RRGEEKTEKRL) are enriched in basic and acidic residues. Low complexity predominate over residues 443-457 (VKTPVSSTAVSSTVK).

Belongs to the RNF168 family. As to quaternary structure, monomer.

The protein localises to the nucleus. It catalyses the reaction S-ubiquitinyl-[E2 ubiquitin-conjugating enzyme]-L-cysteine + [acceptor protein]-L-lysine = [E2 ubiquitin-conjugating enzyme]-L-cysteine + N(6)-ubiquitinyl-[acceptor protein]-L-lysine.. It participates in protein modification; protein ubiquitination. Its function is as follows. E3 ubiquitin-protein ligase required for accumulation of repair proteins to sites of DNA damage. Acts with ube2n/ubc13 to amplify the rnf8-dependent histone ubiquitination. Recruited to sites of DNA damage at double-strand breaks (DSBs) by binding to ubiquitinated histone H2A and ubiquitinates histone H2A and H2AX, leading to amplify the rnf8-dependent H2A ubiquitination and promoting the formation of 'Lys-63'-linked ubiquitin conjugates. This leads to concentrate ubiquitinated histones H2A and H2AX at DNA lesions. Catalyzes monoubiquitination of 'Lys-13' and 'Lys-15' of nucleosomal histone H2A (H2AK13Ub and H2AK15Ub, respectively). This chain is E3 ubiquitin-protein ligase rnf168, found in Danio rerio (Zebrafish).